A 196-amino-acid chain; its full sequence is DnaA initiator-associating protein DiaA (196 aa).

The SIS domain occupies 34–196 (LVQSLLNGNK…DNTLFPHQDV (163 aa)).

The protein belongs to the SIS family. DiaA subfamily. In terms of assembly, homotetramer; dimer of dimers.

Functionally, required for the timely initiation of chromosomal replication via direct interactions with the DnaA initiator protein. The chain is DnaA initiator-associating protein DiaA from Escherichia coli O6:K15:H31 (strain 536 / UPEC).